Consider the following 167-residue polypeptide: NAD(P)H-quinone oxidoreductase subunit I, chloroplastic (167 aa).

2 4Fe-4S ferredoxin-type domains span residues 55-84 and 95-124; these read GRIH…VDWK and LNYS…MTEE. Positions 64, 67, 70, 74, 104, 107, 110, and 114 each coordinate [4Fe-4S] cluster.

It belongs to the complex I 23 kDa subunit family. In terms of assembly, NDH is composed of at least 16 different subunits, 5 of which are encoded in the nucleus. [4Fe-4S] cluster serves as cofactor.

It localises to the plastid. The protein resides in the chloroplast thylakoid membrane. It carries out the reaction a plastoquinone + NADH + (n+1) H(+)(in) = a plastoquinol + NAD(+) + n H(+)(out). The catalysed reaction is a plastoquinone + NADPH + (n+1) H(+)(in) = a plastoquinol + NADP(+) + n H(+)(out). NDH shuttles electrons from NAD(P)H:plastoquinone, via FMN and iron-sulfur (Fe-S) centers, to quinones in the photosynthetic chain and possibly in a chloroplast respiratory chain. The immediate electron acceptor for the enzyme in this species is believed to be plastoquinone. Couples the redox reaction to proton translocation, and thus conserves the redox energy in a proton gradient. This Barbarea verna (Land cress) protein is NAD(P)H-quinone oxidoreductase subunit I, chloroplastic.